A 332-amino-acid chain; its full sequence is Glycerol-3-phosphate dehydrogenase [NAD(P)+] (332 aa).

NADPH is bound by residues Trp-13, Lys-34, and Lys-108. Sn-glycerol 3-phosphate-binding residues include Lys-108, Gly-136, and Ser-138. Ala-140 contributes to the NADPH binding site. Residues Lys-191, Asp-244, Ser-254, Arg-255, and Asn-256 each contribute to the sn-glycerol 3-phosphate site. Lys-191 (proton acceptor) is an active-site residue. Arg-255 is a binding site for NADPH. 2 residues coordinate NADPH: Val-279 and Glu-281.

This sequence belongs to the NAD-dependent glycerol-3-phosphate dehydrogenase family.

Its subcellular location is the cytoplasm. The enzyme catalyses sn-glycerol 3-phosphate + NAD(+) = dihydroxyacetone phosphate + NADH + H(+). It carries out the reaction sn-glycerol 3-phosphate + NADP(+) = dihydroxyacetone phosphate + NADPH + H(+). Its pathway is membrane lipid metabolism; glycerophospholipid metabolism. Its function is as follows. Catalyzes the reduction of the glycolytic intermediate dihydroxyacetone phosphate (DHAP) to sn-glycerol 3-phosphate (G3P), the key precursor for phospholipid synthesis. This Francisella tularensis subsp. tularensis (strain FSC 198) protein is Glycerol-3-phosphate dehydrogenase [NAD(P)+].